A 266-amino-acid polypeptide reads, in one-letter code: Thymidylate synthase (266 aa).

R24 is a binding site for dUMP. A (6R)-5,10-methylene-5,6,7,8-tetrahydrofolate-binding site is contributed by H54. Residue 129-130 participates in dUMP binding; it reads RR. The Nucleophile role is filled by C149. DUMP-binding positions include 169–172, N180, and 210–212; these read RSAD and HIY. D172 contacts (6R)-5,10-methylene-5,6,7,8-tetrahydrofolate. A265 provides a ligand contact to (6R)-5,10-methylene-5,6,7,8-tetrahydrofolate.

Belongs to the thymidylate synthase family. Bacterial-type ThyA subfamily. As to quaternary structure, homodimer.

It is found in the cytoplasm. The catalysed reaction is dUMP + (6R)-5,10-methylene-5,6,7,8-tetrahydrofolate = 7,8-dihydrofolate + dTMP. The protein operates within pyrimidine metabolism; dTTP biosynthesis. Catalyzes the reductive methylation of 2'-deoxyuridine-5'-monophosphate (dUMP) to 2'-deoxythymidine-5'-monophosphate (dTMP) while utilizing 5,10-methylenetetrahydrofolate (mTHF) as the methyl donor and reductant in the reaction, yielding dihydrofolate (DHF) as a by-product. This enzymatic reaction provides an intracellular de novo source of dTMP, an essential precursor for DNA biosynthesis. The chain is Thymidylate synthase from Mycolicibacterium smegmatis (strain ATCC 700084 / mc(2)155) (Mycobacterium smegmatis).